The sequence spans 92 residues: Small ribosomal subunit protein uS17 (92 aa).

It belongs to the universal ribosomal protein uS17 family. As to quaternary structure, part of the 30S ribosomal subunit.

One of the primary rRNA binding proteins, it binds specifically to the 5'-end of 16S ribosomal RNA. The chain is Small ribosomal subunit protein uS17 from Cupriavidus metallidurans (strain ATCC 43123 / DSM 2839 / NBRC 102507 / CH34) (Ralstonia metallidurans).